A 450-amino-acid polypeptide reads, in one-letter code: Glutathione reductase (450 aa).

Positions 14, 15, 34, 41, 42, and 50 each coordinate FAD. A glutathione-binding site is contributed by serine 14. An intrachain disulfide couples cysteine 42 to cysteine 47. Tyrosine 99 lines the glutathione pocket. Alanine 115 is a binding site for FAD. Residues alanine 175, isoleucine 178, glutamate 181, arginine 198, arginine 204, and glycine 262 each coordinate NADP(+). Aspartate 303 is a binding site for FAD. Glutamate 309 contributes to the NADP(+) binding site. Threonine 311 lines the FAD pocket. Arginine 319 is a binding site for glutathione. Residue valine 342 coordinates NADP(+). Histidine 439 is a binding site for FAD. Histidine 439 acts as the Proton acceptor in catalysis.

It belongs to the class-I pyridine nucleotide-disulfide oxidoreductase family. In terms of assembly, homodimer. FAD is required as a cofactor.

Its subcellular location is the cytoplasm. The enzyme catalyses 2 glutathione + NADP(+) = glutathione disulfide + NADPH + H(+). Catalyzes the reduction of glutathione disulfide (GSSG) to reduced glutathione (GSH). Constitutes the major mechanism to maintain a high GSH:GSSG ratio in the cytosol. The chain is Glutathione reductase (gor) from Escherichia coli (strain K12).